The sequence spans 159 residues: Large ribosomal subunit protein bL17 (159 aa).

Residues 119-138 (PVTPKAKPAKSTAKAAPKSK) are compositionally biased toward low complexity. The interval 119–159 (PVTPKAKPAKSTAKAAPKSKAPVEETPDEPASEETAEAEAD) is disordered. A compositionally biased stretch (acidic residues) spans 143–159 (ETPDEPASEETAEAEAD).

The protein belongs to the bacterial ribosomal protein bL17 family. In terms of assembly, part of the 50S ribosomal subunit. Contacts protein L32.

The protein is Large ribosomal subunit protein bL17 of Leifsonia xyli subsp. xyli (strain CTCB07).